The sequence spans 270 residues: Tryptophan synthase alpha chain (270 aa).

Catalysis depends on proton acceptor residues E49 and D60.

Belongs to the TrpA family. As to quaternary structure, tetramer of two alpha and two beta chains.

It catalyses the reaction (1S,2R)-1-C-(indol-3-yl)glycerol 3-phosphate + L-serine = D-glyceraldehyde 3-phosphate + L-tryptophan + H2O. It participates in amino-acid biosynthesis; L-tryptophan biosynthesis; L-tryptophan from chorismate: step 5/5. Its function is as follows. The alpha subunit is responsible for the aldol cleavage of indoleglycerol phosphate to indole and glyceraldehyde 3-phosphate. The polypeptide is Tryptophan synthase alpha chain (Pseudomonas fluorescens (strain Pf0-1)).